A 189-amino-acid polypeptide reads, in one-letter code: Protein GrpE (189 aa).

A compositionally biased stretch (basic residues) spans 1-12; the sequence is MDKKKHGSHAGA. The segment at 1 to 36 is disordered; the sequence is MDKKKHGSHAGAHHTDEPAAETVAPAAEGAPAAADR. The segment covering 20–34 has biased composition (low complexity); the sequence is AETVAPAAEGAPAAA.

It belongs to the GrpE family. In terms of assembly, homodimer.

It localises to the cytoplasm. In terms of biological role, participates actively in the response to hyperosmotic and heat shock by preventing the aggregation of stress-denatured proteins, in association with DnaK and GrpE. It is the nucleotide exchange factor for DnaK and may function as a thermosensor. Unfolded proteins bind initially to DnaJ; upon interaction with the DnaJ-bound protein, DnaK hydrolyzes its bound ATP, resulting in the formation of a stable complex. GrpE releases ADP from DnaK; ATP binding to DnaK triggers the release of the substrate protein, thus completing the reaction cycle. Several rounds of ATP-dependent interactions between DnaJ, DnaK and GrpE are required for fully efficient folding. The polypeptide is Protein GrpE (Geobacter metallireducens (strain ATCC 53774 / DSM 7210 / GS-15)).